A 133-amino-acid chain; its full sequence is Phosphoribosyl-AMP cyclohydrolase (133 aa).

Asp77 contributes to the Mg(2+) binding site. Cys78 serves as a coordination point for Zn(2+). 2 residues coordinate Mg(2+): Asp79 and Asp81. Residues Cys95 and Cys102 each coordinate Zn(2+).

Belongs to the PRA-CH family. As to quaternary structure, homodimer. Requires Mg(2+) as cofactor. The cofactor is Zn(2+).

It localises to the cytoplasm. The catalysed reaction is 1-(5-phospho-beta-D-ribosyl)-5'-AMP + H2O = 1-(5-phospho-beta-D-ribosyl)-5-[(5-phospho-beta-D-ribosylamino)methylideneamino]imidazole-4-carboxamide. It functions in the pathway amino-acid biosynthesis; L-histidine biosynthesis; L-histidine from 5-phospho-alpha-D-ribose 1-diphosphate: step 3/9. Functionally, catalyzes the hydrolysis of the adenine ring of phosphoribosyl-AMP. The sequence is that of Phosphoribosyl-AMP cyclohydrolase from Thiobacillus denitrificans (strain ATCC 25259 / T1).